The chain runs to 229 residues: MVHPFLFLEFLRKMLAPLHLSEASADAVSYTWLIIALLLLLSFLATRALKTVPGGLQNFMEIIVGGIENMVTETMGEHGRPYFPLVATIGIFVLVSNLIGLIPGFFPPTANINTTAACAIVVFLSTHVVGIKRHGIGYIKHFCGPILWLTPIMFFIEVIGHLSRPVSLTLRLFGNMNGHELVLIIFFGLAPFLVPLPMMLMGVLVSFIQAFVFMLLTMIYIQGSLEEAH.

6 consecutive transmembrane segments (helical) span residues 25-45 (ADAVSYTWLIIALLLLLSFLA), 86-106 (VATIGIFVLVSNLIGLIPGFF), 111-131 (NINTTAACAIVVFLSTHVVGI), 142-162 (FCGPILWLTPIMFFIEVIGHL), 181-201 (LVLIIFFGLAPFLVPLPMMLM), and 202-222 (GVLVSFIQAFVFMLLTMIYIQ).

Belongs to the ATPase A chain family. In terms of assembly, F-type ATPases have 2 components, CF(1) - the catalytic core - and CF(0) - the membrane proton channel. CF(1) has five subunits: alpha(3), beta(3), gamma(1), delta(1), epsilon(1). CF(0) has three main subunits: a(1), b(2) and c(9-12). The alpha and beta chains form an alternating ring which encloses part of the gamma chain. CF(1) is attached to CF(0) by a central stalk formed by the gamma and epsilon chains, while a peripheral stalk is formed by the delta and b chains.

Its subcellular location is the cell inner membrane. In terms of biological role, key component of the proton channel; it plays a direct role in the translocation of protons across the membrane. This chain is ATP synthase subunit a 3, found in Pelobacter propionicus (strain DSM 2379 / NBRC 103807 / OttBd1).